The sequence spans 98 residues: Defensin-like protein 192 (98 aa).

The N-terminal stretch at 1–27 is a signal peptide; the sequence is MATKSVSTFAIFFILVLAIFETPEIEA. Disulfide bonds link cysteine 32–cysteine 86, cysteine 45–cysteine 69, cysteine 54–cysteine 81, and cysteine 58–cysteine 83.

This sequence belongs to the DEFL family. Protease inhibitor I18 (RTI/MTI-2) subfamily.

Its subcellular location is the secreted. In Arabidopsis thaliana (Mouse-ear cress), this protein is Defensin-like protein 192 (ATTI7).